The sequence spans 503 residues: Cardiolipin synthase (503 aa).

3 consecutive transmembrane segments (helical) span residues 5–25 (LNVLLFLLILSTGLYLTRSFW), 29–49 (IVGAFSVLITITVVFIGIVIF), and 59–79 (LTWLMVLAVFPVVGFIFYLMF). 2 PLD phosphodiesterase domains span residues 238–265 (INYRNHRKIIVIDGTVGFVGGLNIGDEY) and 416–443 (TRGFLHSKIIIVDNEIASIGTSNMDMRS). Catalysis depends on residues histidine 243, lysine 245, aspartate 250, histidine 421, lysine 423, and aspartate 428.

It belongs to the phospholipase D family. Cardiolipin synthase subfamily.

Its subcellular location is the cell membrane. It catalyses the reaction 2 a 1,2-diacyl-sn-glycero-3-phospho-(1'-sn-glycerol) = a cardiolipin + glycerol. Catalyzes the reversible phosphatidyl group transfer from one phosphatidylglycerol molecule to another to form cardiolipin (CL) (diphosphatidylglycerol) and glycerol. This chain is Cardiolipin synthase (cls), found in Halalkalibacterium halodurans (strain ATCC BAA-125 / DSM 18197 / FERM 7344 / JCM 9153 / C-125) (Bacillus halodurans).